A 215-amino-acid polypeptide reads, in one-letter code: Ras-related protein Rab-42 (215 aa).

G19, G21, K22, T23, and T44 together coordinate GTP. Mg(2+) is bound by residues T23, T44, and D68. GTP-binding residues include G71, K128, D130, A157, and K158. Positions H196 to C215 are disordered. 2 S-geranylgeranyl cysteine lipidation sites follow: C213 and C215.

The protein belongs to the small GTPase superfamily. Rab family. Mg(2+) serves as cofactor.

Its subcellular location is the membrane. It carries out the reaction GTP + H2O = GDP + phosphate + H(+). Regulated by guanine nucleotide exchange factors (GEFs) which promote the exchange of bound GDP for free GTP. Regulated by GTPase activating proteins (GAPs) which increase the GTP hydrolysis activity. Inhibited by GDP dissociation inhibitors (GDIs). Functionally, the small GTPases Rab are key regulators of intracellular membrane trafficking, from the formation of transport vesicles to their fusion with membranes. Rabs cycle between an inactive GDP-bound form and an active GTP-bound form that is able to recruit to membranes different sets of downstream effectors directly responsible for vesicle formation, movement, tethering and fusion. The physiological function of RAB42 remains undefined. The sequence is that of Ras-related protein Rab-42 from Mus musculus (Mouse).